The primary structure comprises 318 residues: NADH-ubiquinone oxidoreductase chain 1 (318 aa).

Helical transmembrane passes span Phe2 to Leu22, Thr76 to Ile96, Phe98 to Trp118, Ile140 to Phe160, His171 to Ala191, Ala217 to Leu237, Glu253 to Ile273, and Leu294 to Ile314.

This sequence belongs to the complex I subunit 1 family. As to quaternary structure, core subunit of respiratory chain NADH dehydrogenase (Complex I) which is composed of 45 different subunits.

It localises to the mitochondrion inner membrane. The catalysed reaction is a ubiquinone + NADH + 5 H(+)(in) = a ubiquinol + NAD(+) + 4 H(+)(out). Core subunit of the mitochondrial membrane respiratory chain NADH dehydrogenase (Complex I) which catalyzes electron transfer from NADH through the respiratory chain, using ubiquinone as an electron acceptor. Essential for the catalytic activity and assembly of complex I. This Ateles paniscus (Black spider monkey) protein is NADH-ubiquinone oxidoreductase chain 1 (MT-ND1).